We begin with the raw amino-acid sequence, 553 residues long: Cytochrome P450 86A2 (553 aa).

The helical transmembrane segment at 2–20 (DVSNTMLLVAVVAAYWLWF) threads the bilayer. Cys-459 contacts heme.

The protein belongs to the cytochrome P450 family. Heme serves as cofactor. As to expression, expressed in leaves, stems, flowers and siliques. Expressed at low levels in roots. Expressed in guard cells of cotyledons and leaves.

Its subcellular location is the membrane. It carries out the reaction an organic molecule + reduced [NADPH--hemoprotein reductase] + O2 = an alcohol + oxidized [NADPH--hemoprotein reductase] + H2O + H(+). In terms of biological role, catalyzes the omega-hydroxylation of various fatty acids (FA). Acts on saturated and unsaturated fatty acids with chain lengths from C12 to C18. Plays a major role in the biosynthesis of extracellular lipids. Involved in the biosynthesis of hydroxylated fatty acids required for cutin biosynthesis, cuticle development and repression of bacterial type III gene expression. The protein is Cytochrome P450 86A2 (CYP86A2) of Arabidopsis thaliana (Mouse-ear cress).